The sequence spans 292 residues: Small ribosomal subunit protein uS2 (292 aa).

The segment at 230–292 (RSGGAPGSEK…KKEAGSGEEA (63 aa)) is disordered. Basic and acidic residues-rich tracts occupy residues 247–259 (EWER…KTEA) and 271–292 (PAKE…GEEA).

The protein belongs to the universal ribosomal protein uS2 family.

In Thermobifida fusca (strain YX), this protein is Small ribosomal subunit protein uS2.